The following is a 121-amino-acid chain: MARKRIAFIFTQGPHGSSAGREGLDALLATSALSEDIGVFFISDGVLQLLPQQQPEKILARNYIATFGVLPLYDVENCYLCERSLQQRGLSKMADWILDVTVLSPADLRRELGTYDVVLTF.

Belongs to the DsrF/TusC family. In terms of assembly, heterohexamer, formed by a dimer of trimers. The hexameric TusBCD complex contains 2 copies each of TusB, TusC and TusD. The TusBCD complex interacts with TusE.

It localises to the cytoplasm. Part of a sulfur-relay system required for 2-thiolation of 5-methylaminomethyl-2-thiouridine (mnm(5)s(2)U) at tRNA wobble positions. The protein is Protein TusC of Yersinia pestis bv. Antiqua (strain Antiqua).